We begin with the raw amino-acid sequence, 83 residues long: Large ribosomal subunit protein bL27 (83 aa).

The disordered stretch occupies residues M1–F26.

It belongs to the bacterial ribosomal protein bL27 family.

The sequence is that of Large ribosomal subunit protein bL27 from Desulfosudis oleivorans (strain DSM 6200 / JCM 39069 / Hxd3) (Desulfococcus oleovorans).